Here is a 190-residue protein sequence, read N- to C-terminus: Membrane protein FAM174A (190 aa).

A signal peptide spans 1-29; sequence MPTRRGCSGPCHFLASAFVLLLLPALNQS. Residues Asn27 and Asn83 are each glycosylated (N-linked (GlcNAc...) asparagine). Over 30-123 the chain is Extracellular; the sequence is VVLPSTVPRA…NPSDKPMTQR (94 aa). Residues 37-119 form a disordered region; that stretch reads PRAVQESKPL…AVSPNPSDKP (83 aa). A helical membrane pass occupies residues 124–144; that stretch reads ALTVLVVVSAAVLVYFVVRTV. At 145–190 the chain is on the cytoplasmic side; that stretch reads RMRRRNRKTRRYGVLDTNIENMELTPLEQDDEDDDNTLFDANHPRR. The tract at residues 168–190 is disordered; sequence LTPLEQDDEDDDNTLFDANHPRR. Residues 172–181 are compositionally biased toward acidic residues; the sequence is EQDDEDDDNT.

This sequence belongs to the FAM174 family.

The protein localises to the membrane. In Rattus norvegicus (Rat), this protein is Membrane protein FAM174A (Fam174a).